The chain runs to 414 residues: Eukaryotic initiation factor 4A-3 (414 aa).

Alanine 2 is modified (N-acetylalanine). The Q motif motif lies at 41-69; that stretch reads DSFDAMELQPDLLRGIYAYGFEKPSAIQQ. The Helicase ATP-binding domain maps to 72-242; that stretch reads IIPFCKGLDV…RKFMNKPVRI (171 aa). ATP is bound at residue 85-92; that stretch reads AQSGTGKT. At serine 106 the chain carries Phosphoserine. Threonine 147 bears the Phosphothreonine mark. The DEAD box motif lies at 190–193; it reads DEAD. A Helicase C-terminal domain is found at 253-414; that stretch reads GIKQFYVNVD…ELPSNVADLL (162 aa).

The protein belongs to the DEAD box helicase family. eIF4A subfamily. EIF4F is a multi-subunit complex, the composition of which varies with external and internal environmental conditions. It is composed of at least EIF4A, EIF4E and EIF4G.

The protein localises to the cytoplasm. It catalyses the reaction ATP + H2O = ADP + phosphate + H(+). In terms of biological role, ATP-dependent RNA helicase which is a subunit of the eIF4F complex involved in cap recognition and is required for mRNA binding to ribosome. In the current model of translation initiation, eIF4A unwinds RNA secondary structures in the 5'-UTR of mRNAs which is necessary to allow efficient binding of the small ribosomal subunit, and subsequent scanning for the initiator codon. This is Eukaryotic initiation factor 4A-3 (TIF4A-3) from Arabidopsis thaliana (Mouse-ear cress).